We begin with the raw amino-acid sequence, 202 residues long: Adenylyl-sulfate kinase (202 aa).

ATP is bound at residue 31–38 (GLSASGKS). The active-site Phosphoserine intermediate is Ser105.

This sequence belongs to the APS kinase family.

The catalysed reaction is adenosine 5'-phosphosulfate + ATP = 3'-phosphoadenylyl sulfate + ADP + H(+). The protein operates within sulfur metabolism; hydrogen sulfide biosynthesis; sulfite from sulfate: step 2/3. Functionally, catalyzes the synthesis of activated sulfate. The sequence is that of Adenylyl-sulfate kinase (MET14) from Saccharomyces bayanus (Yeast).